A 528-amino-acid polypeptide reads, in one-letter code: Peptide chain release factor 3 (528 aa).

Residues 11 to 279 (EKRRTFAIIS…GLVEWAPKPL (269 aa)) form the tr-type G domain. Residues 20–27 (SHPDAGKT), 88–92 (DTPGH), and 142–145 (NKCD) contribute to the GTP site.

The protein belongs to the TRAFAC class translation factor GTPase superfamily. Classic translation factor GTPase family. PrfC subfamily.

Its subcellular location is the cytoplasm. Increases the formation of ribosomal termination complexes and stimulates activities of RF-1 and RF-2. It binds guanine nucleotides and has strong preference for UGA stop codons. It may interact directly with the ribosome. The stimulation of RF-1 and RF-2 is significantly reduced by GTP and GDP, but not by GMP. The protein is Peptide chain release factor 3 of Psychromonas ingrahamii (strain DSM 17664 / CCUG 51855 / 37).